Consider the following 303-residue polypeptide: MQMYPVEQAALVELEAGLARREAAQPAAEAPRKAGGVALHVRQVVKRYDGREVLHNVALDVAPGEFLAIVGRSGCGKSTLLRLVAGLEAADGGSITVDGESAAKGRARHADVRVMFQDARLLPWKRVLDNVALGLPRTRRGEAADVLAQVGLADRAREWPARLSGGQRQRVALARALVHHPQLLLLDEPLGALDALTRIEMQGLIESLWRRLGFTALLVTHDVSEAVALADRIVLIEDGRIAMDERVALARPRERGAAGFAQLEAAVLKRVMRQAPQAQVPSHAGAHADPAATTAPLNVSWAA.

The 225-residue stretch at 39–263 folds into the ABC transporter domain; sequence LHVRQVVKRY…ERGAAGFAQL (225 aa). Residue 71 to 78 coordinates ATP; it reads GRSGCGKS.

This sequence belongs to the ABC transporter superfamily. Aliphatic sulfonates importer (TC 3.A.1.17.2) family. As to quaternary structure, the complex is composed of two ATP-binding proteins (SsuB), two transmembrane proteins (SsuC) and a solute-binding protein (SsuA).

Its subcellular location is the cell inner membrane. It catalyses the reaction ATP + H2O + aliphatic sulfonate-[sulfonate-binding protein]Side 1 = ADP + phosphate + aliphatic sulfonateSide 2 + [sulfonate-binding protein]Side 1.. Functionally, part of the ABC transporter complex SsuABC involved in aliphatic sulfonates import. Responsible for energy coupling to the transport system. The polypeptide is Aliphatic sulfonates import ATP-binding protein SsuB (Cupriavidus necator (strain ATCC 17699 / DSM 428 / KCTC 22496 / NCIMB 10442 / H16 / Stanier 337) (Ralstonia eutropha)).